The primary structure comprises 431 residues: Citrate synthase 1 (431 aa).

Active-site residues include His309 and Asp366.

Belongs to the citrate synthase family. In terms of assembly, homohexamer.

It catalyses the reaction oxaloacetate + acetyl-CoA + H2O = citrate + CoA + H(+). It functions in the pathway carbohydrate metabolism; tricarboxylic acid cycle; isocitrate from oxaloacetate: step 1/2. The sequence is that of Citrate synthase 1 (gltA2) from Mycobacterium tuberculosis (strain CDC 1551 / Oshkosh).